The sequence spans 137 residues: Small ribosomal subunit protein uS12 (137 aa).

The segment covering 31–41 (MSRKQTNNTAP) has biased composition (polar residues). Residues 31–57 (MSRKQTNNTAPQKRGVATRVGTMTPKK) form a disordered region. At Asp102 the chain carries 3-methylthioaspartic acid.

It belongs to the universal ribosomal protein uS12 family. Part of the 30S ribosomal subunit. Contacts proteins S8 and S17. May interact with IF1 in the 30S initiation complex.

Its function is as follows. With S4 and S5 plays an important role in translational accuracy. In terms of biological role, interacts with and stabilizes bases of the 16S rRNA that are involved in tRNA selection in the A site and with the mRNA backbone. Located at the interface of the 30S and 50S subunits, it traverses the body of the 30S subunit contacting proteins on the other side and probably holding the rRNA structure together. The combined cluster of proteins S8, S12 and S17 appears to hold together the shoulder and platform of the 30S subunit. This chain is Small ribosomal subunit protein uS12, found in Oenococcus oeni (strain ATCC BAA-331 / PSU-1).